A 217-amino-acid polypeptide reads, in one-letter code: Adenylate kinase (217 aa).

Gly-10 to Thr-15 provides a ligand contact to ATP. The segment at Ser-30–Val-59 is NMP. Residues Thr-31, Arg-36, Glu-57 to Val-59, Gly-85 to Arg-88, and Gln-92 each bind AMP. Residues Gly-126–Asp-163 form an LID region. ATP-binding positions include Arg-127 and Thr-136–Tyr-137. AMP-binding residues include Arg-160 and Arg-171. Residue Gln-199 coordinates ATP.

The protein belongs to the adenylate kinase family. In terms of assembly, monomer.

Its subcellular location is the cytoplasm. The catalysed reaction is AMP + ATP = 2 ADP. It functions in the pathway purine metabolism; AMP biosynthesis via salvage pathway; AMP from ADP: step 1/1. Its function is as follows. Catalyzes the reversible transfer of the terminal phosphate group between ATP and AMP. Plays an important role in cellular energy homeostasis and in adenine nucleotide metabolism. This is Adenylate kinase from Halalkalibacterium halodurans (strain ATCC BAA-125 / DSM 18197 / FERM 7344 / JCM 9153 / C-125) (Bacillus halodurans).